We begin with the raw amino-acid sequence, 881 residues long: Probable inorganic carbon transporter subunit DabA (881 aa).

Zn(2+) contacts are provided by C399, D401, H585, and C600.

It belongs to the inorganic carbon transporter (TC 9.A.2) DabA family. In terms of assembly, forms a complex with DabB. Zn(2+) serves as cofactor.

The protein localises to the cell membrane. Functionally, part of an energy-coupled inorganic carbon pump. This chain is Probable inorganic carbon transporter subunit DabA, found in Geobacillus sp. (strain WCH70).